We begin with the raw amino-acid sequence, 419 residues long: UDP-N-acetylglucosamine 1-carboxyvinyltransferase 2 (419 aa).

22 to 23 serves as a coordination point for phosphoenolpyruvate; sequence KN. R92 serves as a coordination point for UDP-N-acetyl-alpha-D-glucosamine. C116 (proton donor) is an active-site residue. The residue at position 116 (C116) is a 2-(S-cysteinyl)pyruvic acid O-phosphothioketal. UDP-N-acetyl-alpha-D-glucosamine-binding positions include 121–125, D306, and V328; that span reads RPIDL.

The protein belongs to the EPSP synthase family. MurA subfamily.

It localises to the cytoplasm. The enzyme catalyses phosphoenolpyruvate + UDP-N-acetyl-alpha-D-glucosamine = UDP-N-acetyl-3-O-(1-carboxyvinyl)-alpha-D-glucosamine + phosphate. It participates in cell wall biogenesis; peptidoglycan biosynthesis. Cell wall formation. Adds enolpyruvyl to UDP-N-acetylglucosamine. The sequence is that of UDP-N-acetylglucosamine 1-carboxyvinyltransferase 2 from Carboxydothermus hydrogenoformans (strain ATCC BAA-161 / DSM 6008 / Z-2901).